The chain runs to 344 residues: DNA polymerase IV (344 aa).

In terms of domain architecture, UmuC spans 2–183 (IMLIDFDYFF…IKINDIPGIG (182 aa)). Residues aspartate 6 and aspartate 105 each contribute to the Mg(2+) site. Glutamate 106 is an active-site residue.

The protein belongs to the DNA polymerase type-Y family. As to quaternary structure, monomer. It depends on Mg(2+) as a cofactor.

It localises to the cytoplasm. The catalysed reaction is DNA(n) + a 2'-deoxyribonucleoside 5'-triphosphate = DNA(n+1) + diphosphate. Its function is as follows. Poorly processive, error-prone DNA polymerase involved in untargeted mutagenesis. Copies undamaged DNA at stalled replication forks, which arise in vivo from mismatched or misaligned primer ends. These misaligned primers can be extended by PolIV. Exhibits no 3'-5' exonuclease (proofreading) activity. May be involved in translesional synthesis. This chain is DNA polymerase IV, found in Picrophilus torridus (strain ATCC 700027 / DSM 9790 / JCM 10055 / NBRC 100828 / KAW 2/3).